A 29-amino-acid polypeptide reads, in one-letter code: Cytochrome b6-f complex subunit 8 (29 aa).

The helical transmembrane segment at 3–23 (IDVLGWVALLVVFTWSIAMVV) threads the bilayer.

Belongs to the PetN family. The 4 large subunits of the cytochrome b6-f complex are cytochrome b6, subunit IV (17 kDa polypeptide, PetD), cytochrome f and the Rieske protein, while the 4 small subunits are PetG, PetL, PetM and PetN. The complex functions as a dimer.

The protein localises to the cellular thylakoid membrane. Functionally, component of the cytochrome b6-f complex, which mediates electron transfer between photosystem II (PSII) and photosystem I (PSI), cyclic electron flow around PSI, and state transitions. The polypeptide is Cytochrome b6-f complex subunit 8 (Mastigocladus laminosus (Fischerella sp.)).